The chain runs to 117 residues: Large ribosomal subunit protein bL20c (117 aa).

It belongs to the bacterial ribosomal protein bL20 family.

The protein localises to the plastid. The protein resides in the chloroplast. Functionally, binds directly to 23S ribosomal RNA and is necessary for the in vitro assembly process of the 50S ribosomal subunit. It is not involved in the protein synthesizing functions of that subunit. The sequence is that of Large ribosomal subunit protein bL20c from Populus alba (White poplar).